A 231-amino-acid polypeptide reads, in one-letter code: Androgen-dependent TFPI-regulating protein (231 aa).

Over M1 to C7 the chain is Cytoplasmic. A helical membrane pass occupies residues V8–G28. The Extracellular segment spans residues K29 to Y45. The chain crosses the membrane as a helical span at residues L46–V66. Over L67–L85 the chain is Cytoplasmic. Residues L86–F106 form a helical membrane-spanning segment. Residues Y107–P123 lie on the Extracellular side of the membrane. Residues A124–L144 form a helical membrane-spanning segment. Residues R145–L154 are Cytoplasmic-facing. Residues G155 to W172 form a helical membrane-spanning segment. The Extracellular portion of the chain corresponds to R173–P190. The helical transmembrane segment at L191 to G211 threads the bilayer. Residues E212–K231 are Cytoplasmic-facing.

The protein belongs to the AIG1 family. In terms of tissue distribution, highly expressed in flank organs and weakly in testis and earlobes.

The protein resides in the cell membrane. It catalyses the reaction 9-hexadecanoyloxy-octadecanoate + H2O = 9-hydroxy-octadecanoate + hexadecanoate + H(+). It carries out the reaction 12-hexadecanoyloxy-octadecanoate + H2O = 12-hydroxyoctadecanoate + hexadecanoate + H(+). The catalysed reaction is 9-(9Z-hexadecenoyloxy)-octadecanoate + H2O = (9Z)-hexadecenoate + 9-hydroxy-octadecanoate + H(+). The enzyme catalyses 12-(9Z-hexadecenoyloxy)-octadecanoate + H2O = 12-hydroxyoctadecanoate + (9Z)-hexadecenoate + H(+). It catalyses the reaction 13-(9Z-hexadecenoyloxy)-octadecanoate + H2O = 13-hydroxy-octadecanoate + (9Z)-hexadecenoate + H(+). It carries out the reaction 9-octadecanoyloxy-octadecanoate + H2O = 9-hydroxy-octadecanoate + octadecanoate + H(+). The catalysed reaction is 12-octadecanoyloxy-octadecanoate + H2O = 12-hydroxyoctadecanoate + octadecanoate + H(+). The enzyme catalyses 13-octadecanoyloxy-octadecanoate + H2O = 13-hydroxy-octadecanoate + octadecanoate + H(+). It catalyses the reaction 9-(9Z-octadecenoyloxy)-octadecanoate + H2O = 9-hydroxy-octadecanoate + (9Z)-octadecenoate + H(+). It carries out the reaction 12-(9Z-octadecenoyloxy)-octadecanoate + H2O = 12-hydroxyoctadecanoate + (9Z)-octadecenoate + H(+). The catalysed reaction is 13-(9Z-octadecenoyloxy)-octadecanoate + H2O = 13-hydroxy-octadecanoate + (9Z)-octadecenoate + H(+). The enzyme catalyses 5-(9Z-octadecenoyloxy)-octadecanoate + H2O = 5-hydroxy-octadecanoate + (9Z)-octadecenoate + H(+). In terms of biological role, hydrolyzes bioactive fatty-acid esters of hydroxy-fatty acids (FAHFAs), but not other major classes of lipids. Shows a preference for FAHFAs with branching distal from the carboxylate head group of the lipids. Regulates the expression and the cell-associated anticoagulant activity of the inhibitor TFPI in endothelial cells (in vitro). This Mesocricetus auratus (Golden hamster) protein is Androgen-dependent TFPI-regulating protein (ADTRP).